A 431-amino-acid chain; its full sequence is MKKIEKIKRVKGELRVPSDKSITHRAFILGALASGETLVRKPLISGDTLATLEILKAIRTKVREGKEEVLIEGRNYTFLEPHDVLDAKNSGTTARIMSGVLSTQPFFSVLTGDESLKNRPMLRVVEPLREMGAKIDGREEGNKLPIAIRGGNLKGISYFNKKSSAQVKSALLLAGLRAEGMTEVVEPYLSRDHTERMLKLFGAEVITIPEERGHIVKIKGGQELQGTEVYCPADPSSAAYFAALATLAPEGEIRLKEVLLNPTRDGFYRKLIEMGGDISFENYRELSNEPMADLVVRPVDNLKPVKVSPEEVPTLIDEIPILAVLMAFADGVSEVKGAKELRYKESDRIKAIVTNLRKLGVQVEEFEDGFAIHGTKEIKGGVIETFKDHRIAMAFAVLGLVVEEEVIIDHPECVTVSYPEFWEDILKVVEF.

The 3-phosphoshikimate site is built by Lys20, Ser21, and Arg25. Lys20 lines the phosphoenolpyruvate pocket. Positions 91 and 119 each coordinate phosphoenolpyruvate. Residues Ser164, Gln166, Asp317, and Lys344 each contribute to the 3-phosphoshikimate site. Residue Gln166 participates in phosphoenolpyruvate binding. The active-site Proton acceptor is Asp317. Residues Arg348 and Arg390 each contribute to the phosphoenolpyruvate site.

It belongs to the EPSP synthase family. As to quaternary structure, monomer.

It is found in the cytoplasm. The catalysed reaction is 3-phosphoshikimate + phosphoenolpyruvate = 5-O-(1-carboxyvinyl)-3-phosphoshikimate + phosphate. The protein operates within metabolic intermediate biosynthesis; chorismate biosynthesis; chorismate from D-erythrose 4-phosphate and phosphoenolpyruvate: step 6/7. Functionally, catalyzes the transfer of the enolpyruvyl moiety of phosphoenolpyruvate (PEP) to the 5-hydroxyl of shikimate-3-phosphate (S3P) to produce enolpyruvyl shikimate-3-phosphate and inorganic phosphate. This chain is 3-phosphoshikimate 1-carboxyvinyltransferase, found in Aquifex aeolicus (strain VF5).